The primary structure comprises 396 residues: Elongation factor Tu-B (396 aa).

Residues 10–206 form the tr-type G domain; it reads KLHVNVGTIG…ALDTFIPDPT (197 aa). The interval 19-26 is G1; it reads GHVDHGKT. 19–26 is a GTP binding site; sequence GHVDHGKT. Mg(2+) is bound at residue T26. Positions 60-64 are G2; the sequence is GITIS. Residues 81–84 are G3; the sequence is DCPG. GTP-binding positions include 81–85 and 136–139; these read DCPGH and NKAD. Positions 136–139 are G4; it reads NKAD. The interval 174 to 176 is G5; that stretch reads SAR.

It belongs to the TRAFAC class translation factor GTPase superfamily. Classic translation factor GTPase family. EF-Tu/EF-1A subfamily. In terms of assembly, monomer.

It localises to the cytoplasm. The enzyme catalyses GTP + H2O = GDP + phosphate + H(+). GTP hydrolase that promotes the GTP-dependent binding of aminoacyl-tRNA to the A-site of ribosomes during protein biosynthesis. The polypeptide is Elongation factor Tu-B (Xanthomonas campestris pv. campestris (strain ATCC 33913 / DSM 3586 / NCPPB 528 / LMG 568 / P 25)).